Here is a 474-residue protein sequence, read N- to C-terminus: Calcium/calmodulin-dependent protein kinase type IV (474 aa).

Phosphoserine; by autocatalysis is present on residues Ser-11 and Ser-12. Residues 42–296 (FEVESELGRG…TFQALQHPWV (255 aa)) enclose the Protein kinase domain. ATP is bound by residues 48–56 (LGRGATSIV) and Lys-71. The O-linked (GlcNAc) threonine glycan is linked to Thr-53. O-linked (GlcNAc) serine glycosylation occurs at Ser-54. O-linked (GlcNAc) serine glycosylation occurs at Ser-133. Asp-160 (proton acceptor) is an active-site residue. The O-linked (GlcNAc) serine glycan is linked to Ser-185. Position 196 is a phosphothreonine; by CaMKK1 and CaMKK2 (Thr-196). The segment at 297–336 (TGKAANFVHMDTAQKKLQEFNARRKLKAAVKAVVASSRLG) is autoinhibitory domain. Residues 302–319 (NFVHMDTAQKKLQEFNAR) are PP2A-binding. The calmodulin-binding stretch occupies residues 318–337 (ARRKLKAAVKAVVASSRLGS). Residue Ser-332 is modified to Phosphoserine; by autocatalysis. The disordered stretch occupies residues 336-474 (GSASSSHTNI…PQQDAILPEY (139 aa)). A Phosphoserine modification is found at Ser-337. Ser-340, Ser-341, and Ser-352 each carry an O-linked (GlcNAc) serine glycan. The span at 342–356 (HTNIQESNKASSEAQ) shows a compositional bias: polar residues. The segment covering 360-392 (DGKDKTDPLENKMQAGDHEAAKAAADETMKLQS) has biased composition (basic and acidic residues). Acidic residues predominate over residues 393–413 (EEVEEEEGVKEEEEEEEEEEE). Positions 431–454 (QEMKRNSEETLKSVEEEMDPKAEE) are enriched in basic and acidic residues. Phosphoserine is present on residues Ser-437 and Ser-443.

It belongs to the protein kinase superfamily. CAMK Ser/Thr protein kinase family. CaMK subfamily. As to quaternary structure, monomer. Interacts with protein phosphatase 2A (PPP2CA/PPP2CB); the interaction is mutually exclusive with binding to Ca(2+)/calmodulin. In terms of processing, phosphorylated by CaMKK1 and CaMKK2 on Thr-196. Dephosphorylated by protein phosphatase 2A. Autophosphorylated on Ser-11 and Ser-12. Glycosylation at Ser-185 modulates the phosphorylation of CaMK4 at Thr-196 and negatively regulates its activity toward CREB1 in basal conditions and during early inomycin stimulation. Post-translationally, the N-terminus of calspermin is blocked. As to expression, isoform 1 is expressed in brain and isoform 2 is testis specific.

Its subcellular location is the cytoplasm. The protein resides in the nucleus. The catalysed reaction is L-seryl-[protein] + ATP = O-phospho-L-seryl-[protein] + ADP + H(+). It catalyses the reaction L-threonyl-[protein] + ATP = O-phospho-L-threonyl-[protein] + ADP + H(+). Its activity is regulated as follows. Activated by Ca(2+)/calmodulin. Binding of calmodulin results in conformational change that relieves intrasteric autoinhibition and allows phosphorylation of Thr-196 within the activation loop by CaMKK1 or CaMKK2. Phosphorylation of Thr-196 results in a 10-20-fold increase in total activity to generate Ca(2+)/calmodulin-independent activity. Autophosphorylation of the N-terminus Ser-11 and Ser-12 is required for full activation. Inactivated by protein phosphatase 2A (PPP2CA/PPP2CB) which dephosphorylates Thr-196, thereby terminating autonomous activity and helping to maintain the enzyme in its autoinhibited state. Functionally, calcium/calmodulin-dependent protein kinase that operates in the calcium-triggered CaMKK-CaMK4 signaling cascade and regulates, mainly by phosphorylation, the activity of several transcription activators, such as CREB1, MEF2D, JUN and RORA, which play pivotal roles in immune response, inflammation, and memory consolidation. In the thymus, regulates the CD4(+)/CD8(+) double positive thymocytes selection threshold during T-cell ontogeny. In CD4 memory T-cells, is required to link T-cell antigen receptor (TCR) signaling to the production of IL2, IFNG and IL4 (through the regulation of CREB and MEF2). Regulates the differentiation and survival phases of osteoclasts and dendritic cells (DCs). Mediates DCs survival by linking TLR4 and the regulation of temporal expression of BCL2. Phosphorylates the transcription activator CREB1 on 'Ser-133' in hippocampal neuron nuclei and contribute to memory consolidation and long term potentiation (LTP) in the hippocampus. Can activate the MAP kinases MAPK1/ERK2, MAPK8/JNK1 and MAPK14/p38 and stimulate transcription through the phosphorylation of ELK1 and ATF2. Can also phosphorylate in vitro CREBBP, PRM2, MEF2A and STMN1/OP18. Heat-stable, acidic, calmodulin-binding protein. The chain is Calcium/calmodulin-dependent protein kinase type IV (Camk4) from Rattus norvegicus (Rat).